We begin with the raw amino-acid sequence, 388 residues long: Translation initiation factor eIF2B subunit beta (388 aa).

Positions 109–133 (DDFETTTSNNNNNNNNNNINSSSNI) are disordered. Over residues 116-133 (SNNNNNNNNNNINSSSNI) the composition is skewed to low complexity.

This sequence belongs to the eIF-2B alpha/beta/delta subunits family. In terms of assembly, component of the translation initiation factor 2B (eIF2B) complex which is a heterodecamer of two sets of five different subunits: alpha, beta, gamma, delta and epsilon. Subunits alpha, beta and delta comprise a regulatory subcomplex and subunits epsilon and gamma comprise a catalytic subcomplex. Within the complex, the hexameric regulatory complex resides at the center, with the two heterodimeric catalytic subcomplexes bound on opposite sides.

The protein resides in the cytoplasm. It is found in the cytosol. Functionally, acts as a component of the translation initiation factor 2B (eIF2B) complex, which catalyzes the exchange of GDP for GTP on eukaryotic initiation factor 2 (eIF2) gamma subunit. Its guanine nucleotide exchange factor activity is repressed when bound to eIF2 complex phosphorylated on the alpha subunit, thereby limiting the amount of methionyl-initiator methionine tRNA available to the ribosome and consequently global translation is repressed. The protein is Translation initiation factor eIF2B subunit beta (eif2b2) of Dictyostelium discoideum (Social amoeba).